The sequence spans 633 residues: Putative oligopeptide transporter HI_0561 (633 aa).

15 helical membrane passes run 8–28, 45–65, 70–90, 128–148, 180–200, 230–250, 281–301, 311–331, 345–365, 379–399, 420–440, 483–503, 515–535, 564–584, and 604–624; these read GVTFASSIPAAVISMAVLKFF, SAGTLSSVIFVLPGLLMMGYW, FWQTMLICAAGGTLGVLFTIP, IAYGGVLAGLVAFLTNGLRVM, IGIVGGIAMLIGVILTWGVAV, IGVGTIGIAAIWTLLILMKPM, MIYILIATVALIVISLHHFIA, ILLVVVCTFLAVFIGFFVAAA, PISGIGIISVIVISLVLVSIG, FLTALTLFTASIVITTACISN, VALIIGCFVGALVIAPVLEIL, WTYILTGVGLGAVLITIDAFL, VIAVGIGIYLPPSINTPVIVG, LFSAGLIVGESLMGVILAFII, and WDTIGEWFGLIVFIVGIVIFA.

It belongs to the oligopeptide OPT transporter family.

It is found in the cell membrane. This is Putative oligopeptide transporter HI_0561 from Haemophilus influenzae (strain ATCC 51907 / DSM 11121 / KW20 / Rd).